Consider the following 179-residue polypeptide: Ribulose bisphosphate carboxylase small subunit, chloroplastic 3 (179 aa).

A chloroplast-targeting transit peptide spans 1 to 58; it reads MASSATMLSSVATAARAAPAQASMVAPFVGLKSASAFPVTQKPATGLSTLPSNGGRVQ.

This sequence belongs to the RuBisCO small chain family. In terms of assembly, heterohexadecamer of 8 large and 8 small subunits.

It localises to the plastid. It is found in the chloroplast. Its function is as follows. RuBisCO catalyzes two reactions: the carboxylation of D-ribulose 1,5-bisphosphate, the primary event in carbon dioxide fixation, as well as the oxidative fragmentation of the pentose substrate. Both reactions occur simultaneously and in competition at the same active site. Although the small subunit is not catalytic it is essential for maximal activity. This is Ribulose bisphosphate carboxylase small subunit, chloroplastic 3 from Fritillaria agrestis (Stinkbells).